Here is a 160-residue protein sequence, read N- to C-terminus: uncharacterized protein (160 aa).

The protein resides in the mitochondrion. This is an uncharacterized protein from Arabidopsis thaliana (Mouse-ear cress).